The following is a 413-amino-acid chain: Serine/threonine transporter SstT (413 aa).

10 helical membrane passes run 18 to 38, 52 to 72, 86 to 106, 119 to 139, 145 to 165, 196 to 216, 221 to 241, 292 to 312, 320 to 340, and 360 to 380; these read LSLVTQILIGLIAGIALALFA, FVSALKAVAPILVFVLVMASI, ILFLYLLGTFAAAVVAVIASM, IAVSAPGGISEVLQSLLLSVV, ALMNANFIGILAWAIGMGVAI, LGIFGLVASTLATSGFGALIG, LAVLLGCMLFVALVMNPLIVF, VSIPLGATINMAGAAITITVL, LGIAVDIPTAILLSVVAAICA, and LFGIPSEIAMQVVAVGFIIGV.

The protein belongs to the dicarboxylate/amino acid:cation symporter (DAACS) (TC 2.A.23) family.

The protein resides in the cell inner membrane. The enzyme catalyses L-serine(in) + Na(+)(in) = L-serine(out) + Na(+)(out). It catalyses the reaction L-threonine(in) + Na(+)(in) = L-threonine(out) + Na(+)(out). Its function is as follows. Involved in the import of serine and threonine into the cell, with the concomitant import of sodium (symport system). This Pseudomonas fluorescens (strain Pf0-1) protein is Serine/threonine transporter SstT.